The sequence spans 108 residues: Putative disulfide oxidoreductase YuzD (108 aa).

Cys-16 and Cys-19 are oxidised to a cystine.

In Bacillus subtilis (strain 168), this protein is Putative disulfide oxidoreductase YuzD (yuzD).